A 340-amino-acid polypeptide reads, in one-letter code: MLSLSKNWNTLIKPNKVAYENFPETNNKAKIVVEPLERGFGLTLGNAMRRVLLSSLQGAAITSIKIPAIEHEFSSIPGVKEDVSEVILNIKGIEVKMHVAEKRIMKLKATGPCVVKAGMIETGHDVEILNPDHVICDLAKDKQLEMELTCKVGKGYVLSTNSYEDNLPIGEIAIDALFNPVKSVTYKVENTRVGQVTDYDKLIMFVETNGDVLPEMAVGLAARILQEQLQLFISFEEQEEDKQVKTDALPFAPYLLKRVDELELSVRSANCLKNDNIIYIGDLVKRTESDMLRTPNFGRKSLNEIKEILAKFNLRFGMDVPDWPPENIQELSKRYEDSYN.

The interval 1 to 236 (MLSLSKNWNT…EQLQLFISFE (236 aa)) is alpha N-terminal domain (alpha-NTD). The interval 251–340 (FAPYLLKRVD…LSKRYEDSYN (90 aa)) is alpha C-terminal domain (alpha-CTD).

It belongs to the RNA polymerase alpha chain family. Homodimer. The RNAP catalytic core consists of 2 alpha, 1 beta, 1 beta' and 1 omega subunit. When a sigma factor is associated with the core the holoenzyme is formed, which can initiate transcription.

The catalysed reaction is RNA(n) + a ribonucleoside 5'-triphosphate = RNA(n+1) + diphosphate. In terms of biological role, DNA-dependent RNA polymerase catalyzes the transcription of DNA into RNA using the four ribonucleoside triphosphates as substrates. The polypeptide is DNA-directed RNA polymerase subunit alpha (Rickettsia peacockii (strain Rustic)).